Reading from the N-terminus, the 566-residue chain is APC/C activator protein CDH1 (566 aa).

Residues 1–18 (MSTNLNPFMNNTPSSSPL) show a composition bias toward polar residues. A disordered region spans residues 1-56 (MSTNLNPFMNNTPSSSPLKGSESKRVSKRPISSSSSASLLSSPSRRSRPSTVYGDR). Low complexity predominate over residues 29–44 (RPISSSSSASLLSSPS). The C-box signature appears at 55–61 (DRYIPSR). Serine 213 bears the Phosphoserine mark. WD repeat units lie at residues 258-298 (PSLA…VVHL), 300-339 (DTEN…CIRT), 342-379 (GHID…PFFE), 383-422 (SHTQ…PILT), 425-467 (EHKA…KMSD), 469-510 (DSGS…PIAI), and 513-552 (GHSF…KAKV).

This sequence belongs to the WD repeat CDC20/Fizzy family. As to quaternary structure, associates with the APC/C complex. Interacts with CLB2, CLB3, CDC5, HSL1, MSN5 and PSE1. In terms of processing, phosphorylated at multiple sites by CDC28, probably in its CLB5 bound form, in S, G2 and M phase of the cell cycle, thereby blocking the association of CDH1 to the APC/C and promoting nuclear export of CDH1 by MSN5. Dephosphorylated and activated by CDC14 in late anaphase, which may be necessary for PSE1-dependent nuclear localization.

The protein resides in the cytoplasm. The protein localises to the nucleus. Activator protein that regulates the ubiquitin ligase activity and substrate specificity of the anaphase promoting complex/cyclosome (APC/C). During telophase and in the subsequent G1 phase of the cell cycle, recognizes and binds proteins containing a destruction box (D-box) and an additional degradation signal termed the KEN box including ASE1, CDC20, the B-type cyclins CLB2 and CLB3, the polo-like kinase CDC5 and HSL1, and recruits them in a C-box-dependent manner to the APC/C for ubiquitination and subsequent proteolysis. Required for exit from mitosis, cytokinesis and formation of prereplicative complexes in G1. Probably is the target of a BUB2-dependent spindle checkpoint pathway. The sequence is that of APC/C activator protein CDH1 (CDH1) from Saccharomyces cerevisiae (strain ATCC 204508 / S288c) (Baker's yeast).